Here is a 694-residue protein sequence, read N- to C-terminus: TBC1 domain family member 14 (694 aa).

Serine 92 carries the post-translational modification Phosphoserine. The segment covering 272–289 (TAQKDSKKTQKEYEDKAG) has biased composition (basic and acidic residues). The disordered stretch occupies residues 272 to 305 (TAQKDSKKTQKEYEDKAGRPSRPPSPKQNVRKNL). The residue at position 296 (serine 296) is a Phosphoserine. Residues 402 to 612 (GIPPSVRGKV…RIWDVFCRDG (211 aa)) enclose the Rab-GAP TBC domain.

In terms of assembly, interacts with ULK1. May interact with RAB11A and RAB11B, but does not exhibit any GTPase-activating activity toward these proteins. Interacts with TRAPPC8.

It localises to the golgi apparatus. The protein localises to the cis-Golgi network. It is found in the trans-Golgi network. Its function is as follows. Plays a role in the regulation of starvation-induced autophagosome formation. Together with the TRAPPIII complex, regulates a constitutive trafficking step from peripheral recycling endosomes to the early Golgi, maintaining the cycling pool of ATG9 required for initiation of autophagy. The sequence is that of TBC1 domain family member 14 (Tbc1d14) from Mus musculus (Mouse).